We begin with the raw amino-acid sequence, 64 residues long: Ribosome biogenesis protein Nop10 (64 aa).

The protein belongs to the NOP10 family.

In terms of biological role, involved in ribosome biogenesis; more specifically in 18S rRNA pseudouridylation and in cleavage of pre-rRNA. The sequence is that of Ribosome biogenesis protein Nop10 from Ignicoccus hospitalis (strain KIN4/I / DSM 18386 / JCM 14125).